The chain runs to 176 residues: MKIIAKKDLFINDEIRVREVRLVGLEGEQLGIKPLSEAQSLADASNVDLVLIQPQAVPPVAKLMDYGKFKFEYQKKQKEQRKKQSVVTVKEVRLSPVIDKGDFETKLRNGRKFLEKGNKVKVSIRFKGRMITHKEIGAKVLADFAEATQDIAIIEQRAKMDGRQMFMQLAPISDKK.

It belongs to the IF-3 family. Monomer.

The protein localises to the cytoplasm. IF-3 binds to the 30S ribosomal subunit and shifts the equilibrium between 70S ribosomes and their 50S and 30S subunits in favor of the free subunits, thus enhancing the availability of 30S subunits on which protein synthesis initiation begins. This is Translation initiation factor IF-3 from Streptococcus pyogenes serotype M18 (strain MGAS8232).